The following is a 790-amino-acid chain: AMP deaminase (790 aa).

Residues methionine 1–phenylalanine 14 are compositionally biased toward polar residues. A disordered region spans residues methionine 1–aspartate 26. Zn(2+)-binding residues include histidine 221 and histidine 223. Residues histidine 223 and lysine 292 to tyrosine 297 each bind substrate. Histidine 488 contacts Zn(2+). Glutamate 491 provides a ligand contact to substrate. Histidine 510 serves as the catalytic Proton acceptor. Position 565 (aspartate 565) interacts with Zn(2+). Residue aspartate 566 to glutamine 569 coordinates substrate. Disordered regions lie at residues asparagine 698 to glycine 726 and proline 739 to lysine 790. Low complexity-rich tracts occupy residues glycine 706 to glycine 726 and asparagine 750 to asparagine 781.

The protein belongs to the metallo-dependent hydrolases superfamily. Adenosine and AMP deaminases family. In terms of assembly, homodimer. The cofactor is Zn(2+).

Its subcellular location is the cytoplasm. It carries out the reaction AMP + H2O + H(+) = IMP + NH4(+). It participates in purine metabolism; IMP biosynthesis via salvage pathway; IMP from AMP: step 1/1. With respect to regulation, activated by ATP, inhibited by GTP, EDTA and inorganic phosphate. Catalyzes the conversion of adenosine monophosphate (AMP) to inosine monophosphate (IMP) and ammonia (NH4(+)). Participates in the regulation of the adenylated nucleotide pool and the interconversion to guanylated nucleotides during early morphodifferentiation. This chain is AMP deaminase (amdA), found in Dictyostelium discoideum (Social amoeba).